The chain runs to 177 residues: Thaumatin-like protein (177 aa).

A signal peptide spans 1-26; the sequence is MASPATSSAVLVVVLVATLAAGGANA.

Belongs to the thaumatin family.

It is found in the secreted. This Oryza sativa subsp. japonica (Rice) protein is Thaumatin-like protein.